A 180-amino-acid polypeptide reads, in one-letter code: NADH-quinone oxidoreductase subunit I (180 aa).

2 consecutive 4Fe-4S ferredoxin-type domains span residues 48 to 80 (IVLT…LQKS) and 90 to 119 (EFFR…LTPD). Residues C60, C63, C66, C70, C99, C102, C105, and C109 each contribute to the [4Fe-4S] cluster site. Residues 161-174 (KPKGDAENEAKPID) show a composition bias toward basic and acidic residues. A disordered region spans residues 161–180 (KPKGDAENEAKPIDVKSLLP).

It belongs to the complex I 23 kDa subunit family. In terms of assembly, NDH-1 is composed of 14 different subunits. Subunits NuoA, H, J, K, L, M, N constitute the membrane sector of the complex. Requires [4Fe-4S] cluster as cofactor.

It is found in the cell inner membrane. The enzyme catalyses a quinone + NADH + 5 H(+)(in) = a quinol + NAD(+) + 4 H(+)(out). Functionally, NDH-1 shuttles electrons from NADH, via FMN and iron-sulfur (Fe-S) centers, to quinones in the respiratory chain. The immediate electron acceptor for the enzyme in this species is believed to be ubiquinone. Couples the redox reaction to proton translocation (for every two electrons transferred, four hydrogen ions are translocated across the cytoplasmic membrane), and thus conserves the redox energy in a proton gradient. The protein is NADH-quinone oxidoreductase subunit I of Aeromonas hydrophila subsp. hydrophila (strain ATCC 7966 / DSM 30187 / BCRC 13018 / CCUG 14551 / JCM 1027 / KCTC 2358 / NCIMB 9240 / NCTC 8049).